Here is a 78-residue protein sequence, read N- to C-terminus: Neurogranin (78 aa).

Met-1 carries the N-acetylmethionine modification. Cys-3 and Cys-51 are joined by a disulfide. One can recognise an IQ domain in the interval 26 to 47 (ANAAAAKIQASFRGHMARKKIK). Ser-36 is subject to Phosphoserine; by PHK and PKC. The segment at 39–78 (GHMARKKIKSGECGRKGPGPGGPGGAGGARGGAGGGPSGD) is disordered. Positions 48–78 (SGECGRKGPGPGGPGGAGGARGGAGGGPSGD) constitute a Collagen-like domain. The span at 54 to 78 (KGPGPGGPGGAGGARGGAGGGPSGD) shows a compositional bias: gly residues. Arg-68 carries the citrulline; partial modification. Arg-68 carries the omega-N-methylarginine modification.

This sequence belongs to the neurogranin family. Interacts with apo-calmodulin; this interaction decreases the affinity of calmodulin for calcium ions. In terms of processing, disulfide bond formation is redox-sensitive. The cysteine residues are readily oxidized by several nitric acid (NO) donors and other oxidants to form intramolecular disulfide. Cys-51 can form a disulfide with any other of the cysteine residues with an order of reactivity Cys-9 &gt; Cys-4 &gt; Cys-3. Post-translationally, phosphorylated at Ser-36 by PHK and PKC, phosphorylation prevents interaction with Calmodulin and interrupts several learning- and memory-associated functions.

It localises to the cytoplasm. Its subcellular location is the synapse. The protein localises to the cell projection. The protein resides in the dendritic spine. Regulates the affinity of calmodulin for calcium. Involved in synaptic plasticity and spatial learning. This is Neurogranin (Nrgn) from Mus musculus (Mouse).